Reading from the N-terminus, the 395-residue chain is Fractalkine (395 aa).

An N-terminal signal peptide occupies residues 1 to 24; it reads MAPSPLAWLLRLAAFFHLCTLLPG. The tract at residues 25-100 is chemokine and involved in interaction with ITGAV:ITGB3 and ITGA4:ITGB1; the sequence is QHLGMTKCEI…HQAAALTKNG (76 aa). Over 25-336 the chain is Extracellular; the sequence is QHLGMTKCEI…TPVPDTQAAT (312 aa). Cystine bridges form between C32–C58 and C36–C74. Residues 101–336 are mucin-like stalk; that stretch reads GKFEKRVDNV…TPVPDTQAAT (236 aa). Polar residues-rich tracts occupy residues 148–172 and 201–210; these read ARGT…TSEA and AVYQSGSSSW. 2 disordered regions span residues 148–180 and 201–305; these read ARGT…LTAK and AVYQ…SGSQ. Residues 218–236 show a composition bias toward low complexity; that stretch reads SPSTTAPSPQVSTTSPSTP. The helical transmembrane segment at 337–357 threads the bilayer; the sequence is RRQAVGLLAFLGLLFCLGVAM. The Cytoplasmic portion of the chain corresponds to 358-395; sequence FAYQSLQGCPRKMAGEMVEGLRYVPRSCGSNSYVLVPV.

It belongs to the intercrine delta family. Monomer. Forms a ternary complex with CX3CR1 and ITGAV:ITGB3 or ITGA4:ITGB1. Post-translationally, a soluble short 80 kDa form may be released by proteolytic cleavage from the long membrane-anchored form. As to expression, highest levels in brain. Lower levels in kidney, heart and lung. Also found in skeletal muscle and testis. Highly expressed in lesional smooth muscle cells, but not macrophages. Low levels of ABCD-3 mRNA were also found in anti-CD40-stimulated splenic B-cells, but not in resting B-cells. Also expressed in dendritic cells.

It is found in the cell membrane. The protein localises to the secreted. Its function is as follows. Chemokine that acts as a ligand for both CX3CR1 and integrins ITGAV:ITGB3 and ITGA4:ITGB1. The CX3CR1-CX3CL1 signaling exerts distinct functions in different tissue compartments, such as immune response, inflammation, cell adhesion and chemotaxis. Regulates leukocyte adhesion and migration processes at the endothelium. Can activate integrins in both a CX3CR1-dependent and CX3CR1-independent manner. In the presence of CX3CR1, activates integrins by binding to the classical ligand-binding site (site 1) in integrins. In the absence of CX3CR1, binds to a second site (site 2) in integrins which is distinct from site 1 and enhances the binding of other integrin ligands to site 1. In terms of biological role, the soluble form is chemotactic for T-cells and monocytes, but not for neutrophils. Functionally, the membrane-bound form promotes adhesion of those leukocytes to endothelial cells. This is Fractalkine from Mus musculus (Mouse).